The primary structure comprises 571 residues: Potassium-transporting ATPase potassium-binding subunit (571 aa).

The next 11 helical transmembrane spans lie at 5-25 (GWIQIALYGAIVLALVKPLGS), 64-84 (LAYTGAVILFHVLGFAVLYAI), 136-156 (GLTHQNFLSAATGIAVAVALI), 179-199 (LYVLLPICVPYTLFLVWQGIP), 254-274 (LSNLVQMVSIFAIGAALTNVF), 285-305 (WAILGAMGILFLAGVLVTYWA), 330-350 (FGIAASALFAVITTAASCGAV), 357-376 (FTALGGLIPLLNMQLGEIII), 421-441 (MLGILCLPLMMLGFTALATVV), 488-508 (LAIGMLVGRFFVKIPVLAIAG), and 527-547 (GGLFVGLLVGVILIIGGLTFF).

It belongs to the KdpA family. As to quaternary structure, the system is composed of three essential subunits: KdpA, KdpB and KdpC.

The protein localises to the cell inner membrane. Part of the high-affinity ATP-driven potassium transport (or Kdp) system, which catalyzes the hydrolysis of ATP coupled with the electrogenic transport of potassium into the cytoplasm. This subunit binds the periplasmic potassium ions and delivers the ions to the membrane domain of KdpB through an intramembrane tunnel. The chain is Potassium-transporting ATPase potassium-binding subunit from Methylobacterium radiotolerans (strain ATCC 27329 / DSM 1819 / JCM 2831 / NBRC 15690 / NCIMB 10815 / 0-1).